A 43-amino-acid chain; its full sequence is SPbeta prophage-derived uncharacterized protein YotD (43 aa).

This chain is SPbeta prophage-derived uncharacterized protein YotD (yotD), found in Bacillus subtilis (strain 168).